Here is a 206-residue protein sequence, read N- to C-terminus: Glycerol-3-phosphate acyltransferase (206 aa).

The next 5 membrane-spanning stretches (helical) occupy residues Ile-14 to Leu-34, Ala-67 to Leu-87, Ala-91 to Phe-111, Leu-124 to Phe-144, and Tyr-148 to Gly-168.

This sequence belongs to the PlsY family. Probably interacts with PlsX.

It is found in the cell inner membrane. It catalyses the reaction an acyl phosphate + sn-glycerol 3-phosphate = a 1-acyl-sn-glycero-3-phosphate + phosphate. The protein operates within lipid metabolism; phospholipid metabolism. Catalyzes the transfer of an acyl group from acyl-phosphate (acyl-PO(4)) to glycerol-3-phosphate (G3P) to form lysophosphatidic acid (LPA). This enzyme utilizes acyl-phosphate as fatty acyl donor, but not acyl-CoA or acyl-ACP. The sequence is that of Glycerol-3-phosphate acyltransferase from Rhizobium etli (strain CIAT 652).